A 339-amino-acid polypeptide reads, in one-letter code: Uroporphyrinogen decarboxylase (339 aa).

Substrate is bound by residues 21 to 25 (RQAGR), Phe40, Asp71, Tyr147, Ser202, and His315.

Belongs to the uroporphyrinogen decarboxylase family. Homodimer.

The protein localises to the cytoplasm. It catalyses the reaction uroporphyrinogen III + 4 H(+) = coproporphyrinogen III + 4 CO2. The protein operates within porphyrin-containing compound metabolism; protoporphyrin-IX biosynthesis; coproporphyrinogen-III from 5-aminolevulinate: step 4/4. Functionally, catalyzes the decarboxylation of four acetate groups of uroporphyrinogen-III to yield coproporphyrinogen-III. The chain is Uroporphyrinogen decarboxylase from Helicobacter pylori (strain ATCC 700392 / 26695) (Campylobacter pylori).